Reading from the N-terminus, the 163-residue chain is Nucleotide-binding protein MT0592 (163 aa).

Belongs to the YajQ family.

Nucleotide-binding protein. The sequence is that of Nucleotide-binding protein MT0592 from Mycobacterium tuberculosis (strain CDC 1551 / Oshkosh).